The sequence spans 390 residues: Chorismate synthase (390 aa).

Positions 39 and 45 each coordinate NADP(+). FMN is bound by residues 132 to 134, 253 to 254, Gly-298, 313 to 317, and Arg-339; these read RSS, NA, and KPIPT.

The protein belongs to the chorismate synthase family. In terms of assembly, homotetramer. FMNH2 is required as a cofactor.

It catalyses the reaction 5-O-(1-carboxyvinyl)-3-phosphoshikimate = chorismate + phosphate. The protein operates within metabolic intermediate biosynthesis; chorismate biosynthesis; chorismate from D-erythrose 4-phosphate and phosphoenolpyruvate: step 7/7. In terms of biological role, catalyzes the anti-1,4-elimination of the C-3 phosphate and the C-6 proR hydrogen from 5-enolpyruvylshikimate-3-phosphate (EPSP) to yield chorismate, which is the branch point compound that serves as the starting substrate for the three terminal pathways of aromatic amino acid biosynthesis. This reaction introduces a second double bond into the aromatic ring system. The polypeptide is Chorismate synthase (Bacillus velezensis (strain DSM 23117 / BGSC 10A6 / LMG 26770 / FZB42) (Bacillus amyloliquefaciens subsp. plantarum)).